Here is a 301-residue protein sequence, read N- to C-terminus: GLABROUS1 enhancer-binding protein-like 2 (301 aa).

Residues methionine 1–asparagine 62 are disordered. Over residues lysine 44–threonine 54 the composition is skewed to basic residues. Residues leucine 268–phenylalanine 289 form a non-canonical leucine-zipper region.

This sequence belongs to the GeBP family. In terms of assembly, homo- and heterodimers. Interacts with GEBP, GPL1 and GPL3. Expressed in the apical meristem and young leaf primordia. Detected in the vascular tissues of cotyledons and leaves, in hydathodes and in the septun of siliques, but not in roots.

It is found in the nucleus. Functionally, probable transcription factor. May play redundant roles with GEBP and GPL1 in cytokinin responses by regulating the transcript levels of type-A ARR response genes. Involved in stress responses. Plays a repressive role in cell expansion by counteracting the positive role of CPR5 in this process, but does not regulate cell proliferation or endoreduplication. The chain is GLABROUS1 enhancer-binding protein-like 2 from Arabidopsis thaliana (Mouse-ear cress).